A 333-amino-acid polypeptide reads, in one-letter code: Ribosome biogenesis regulatory protein homolog (333 aa).

2 disordered regions span residues 227–248 (KANV…VSGE) and 271–333 (AAAV…ARKG). A compositionally biased stretch (basic and acidic residues) spans 278-295 (LREKKEKSERKGAKDQTR). Residues 324–333 (GANKAKARKG) show a composition bias toward basic residues.

Belongs to the RRS1 family.

It is found in the nucleus. It localises to the nucleolus. Its function is as follows. Involved in ribosomal large subunit assembly. This Caenorhabditis elegans protein is Ribosome biogenesis regulatory protein homolog.